The sequence spans 148 residues: Putative transmembrane protein ORF23 (148 aa).

The first 18 residues, 1 to 18, serve as a signal peptide directing secretion; sequence MVIILLGVSIVVPGLFLA. The Extracellular portion of the chain corresponds to 19–118; sequence TETPQTNTFE…YVGWPSGAET (100 aa). Residues 119 to 139 form a helical membrane-spanning segment; sequence IITNIADIIIMATAVMIIGAI. Residues 140–148 are Cytoplasmic-facing; the sequence is YTGYKVSIK.

Its subcellular location is the host membrane. The chain is Putative transmembrane protein ORF23 from His1 virus (isolate Australia/Victoria) (His1V).